The primary structure comprises 385 residues: MSVASFFSSLPARPFGYKDGRGRTGMVPTTDIGRRMVKPPVLACRPIESNTYHGSVTSVFLTKSSRSPSPSLSPTPTALDDEIVLDLKPFLIIYKSGRIERFLGTTVIPACPEVATKDVVIDPATGVSVRLYLPNVVDLPSKKLPVLVYFHGGGFVIENTGSPNYHNYLTLLAAKAGVLIVSINYRLAPEYPLPASYDDCMAGFNWVVSHSAGPALEPWLAQHGDFSQILLSGDSAGGNVTHYVAMRADAGVIEGVAIVHPYFLGSEPVGNEINDPANIEFHDKLWRLAAPDTEGLDDPLINPVAPGAPSLAGLKCKRAVVFVAGNDFLVERGRMYYEALVKSGWRGEAELVQHEGVGHVFHLSDYSGDISVAMMTKLIAFLKGE.

The N-terminal 77 residues, 1–77 (MSVASFFSSL…PSPSLSPTPT (77 aa)), are a transit peptide targeting the chloroplast. Ser235 acts as the Acyl-ester intermediate in catalysis. Residues Asp327 and His359 each act as charge relay system in the active site.

The protein belongs to the AB hydrolase superfamily. In terms of assembly, homodimer. As to expression, expressed in roots, stems, leaves, petals, stamens and pistils, but not in bulb scales.

Its subcellular location is the plastid. It is found in the chloroplast. It carries out the reaction 6-tuliposide A = tulipalin A + D-glucose. Inhibited by NaF, AgNO(3), HgCl(2), CuSO(4) and phenylmethylsulfonyl fluoride (PMSF). In terms of biological role, lactone-forming carboxylesterases, specifically catalyzing intramolecular transesterification, but not hydrolysis. Involved in the biosynthesis of tulipalins, defensive chemicals that show antimicrobial activities against a broad range of strains of bacteria and fungi. Substrates are 6-tuliposide A &gt; 6-tuliposide B. The polypeptide is Tuliposide A-converting enzyme 1, chloroplastic (TCEA1) (Tulipa gesneriana (Garden tulip)).